The following is a 118-amino-acid chain: Non-specific lipid-transfer protein 3 (118 aa).

A signal peptide spans 1–25 (MARSMNLACVALVMCMVVIAPMAEA). Intrachain disulfides connect Cys-29–Cys-76, Cys-39–Cys-53, Cys-54–Cys-99, and Cys-74–Cys-113.

It belongs to the plant LTP family.

In terms of biological role, plant non-specific lipid-transfer proteins transfer phospholipids as well as galactolipids across membranes. May play a role in wax or cutin deposition in the cell walls of expanding epidermal cells and certain secretory tissues. The protein is Non-specific lipid-transfer protein 3 of Lens culinaris (Lentil).